The sequence spans 2464 residues: MTAPWPVKHDPIALVGIGCHMPGGVRDIPALWEFLRKQKDVHREFDEPRFSAKGFSHSNPDRPGTAVARSGFLLDEDPRLFDAAFFGITDNEVETMDASQRKLLEVTYEAFENAGETWEGVSGSRVGVFVGDISFDNYVSQTRDWDYGGKYSATGAFPNMLANRIHYVFNLKGPSLLVNSACTSAMYALHLAMNSIRNGDCESAIVAGSNWIMDPNCHIAMGKLGALSATSRSHTFDASADGYARGEGFAALYLKKTSLAIEDGSPIRALIMGSAINANGRTNGITNPSGPAQEIVIREAYKNAGNLDPSQTTFLECHGTGTRVGDPTEIKAAGNVFGPSRAFEQNDQLVVGSVKTNLGHLEGACALPGILKVVAALEQGEIPPTLGFQTPNPRIDFKQAKARVSTQVEPWPKDKLKRASVTSAGFGGTNGHCIIDHVHNLLPSYVKPGIVGQRVEQLNGQNGINGTNGTNGTNGTNGTNGTNGTNGHHNPKTEAPKLVRKADAGTRKLVVFPFSAHNQTSLVANVDSLNEVIHQHSLADVAYTLSARRSRFMHRTYCIADKDQVPETGLKQENKLEIVSSPQRVSAGFIFTGQGAQWHAMGAGLLQYSVFQNVILYLDSVLSILPEPPSWRIADFIVGNCDTDSIQIPAVSQTVCTAVQIGLVDLLASWSVRPAGVAGHSSGEIAAAYASGRITAAEAIVAAYYRGYMVSFNNQRGAMLAVGFGPEKAMEYIREAGLEERLKVAAINSFDSVTISGDADSVEDLSARLSKESVFNRLLRTGGLAYHSHHMLPFGSAYEEKVNDGLRHIKSLGVDTTSAKYPFIPWTSSVIPDKSTTEVTASYWRANLESPVRFTDAVSNLLSLPGLNIGALIEIGPHPALKGPLGQTMKSLGKVIPHIASLKRNEDAQRLMLDCAGTLFALNVPVNLVAVNAIDGQGPKGEHHLEYGCTAIDLPRYKYTYGPIKYHESRLSKEYRLRPTPRHDLLGSKVPGTTKLRPQWRNMLRLKDLGWLNDHRVPPHVLHPGAAHIVMAMVAAEHKYNEFPDALPIIGLTMRNVSIKKTLVVPEDDHGVEIVLSMELEDGATAKSPGWASFSIASVVRDSDQWTEHCSGQIKIEVSTFEQATPISTTMDGRLVDAQTWYTRFADMGLQFGPSFQGYSDIRADPAKNIASARLALNTTAGMFPGGESTYPIHPASLDLVIRLGLMACNGGQAETASVQLPIHFNQMKFNYGHLEGRDWATGVSRGELRGLRGAYAQLQMLDEEGKVMLDIDNMRFTSLNNEQESTSTGDRACKAYSSPFARLVWRPDIRTLSKDQFNEALKCCQENVGEFPQLCKIFDLAGHANPDLRVLELGASSNAGAGKAVLKTLVGSNNIKRYREYVATDTTEERLESVRESTAEFRDVKYSVLDINEVPSEQGFQSGLYDIIICSDGPQTLQAMQHLRKLVTPAGRLVQVSRTGREITSESLRNVDFELVGEVTEPAHHSTITVHALRVTERHQIHSNRLVHLLHGDQGAPELLHRLAQVLGDLGIAIKVSSLDDTQSVVAPNSHVVAFLDGDNLLFAASQHRIGLFQHLAANTASMMWLTSCGLVKGRNPDGSFVSGLLRTLAAENPAGQFLSVDIDAKDFRVQDTEMDTLVRSLVDVVLSLQQTSEDSHDIVVNHDLAWQDGNMWVSRLVPDAELQGYDQTTMDDQNMKAVPLSTLGPVRAAFRTPGILTSLYFKPYTELWETLPHDWIEIKLEAVGLNWKDLGLCSGRFDQNNLSNEYVGVVSDMGSSVHDLSIGDRVYGMGKGHFGNYTRVPAVLAQKLEAGVDSLEAATMPLVYMTAVYAFEHITRVRKGSKVLIQSASGGLGLAATQLALSKGADVYVTVGTADKAQFLSDVMGISSDHIFSSRRLTDVPRMISATKNGGFDVILSTSQGDMLYESIKALAPLGHLIDVGRMDVTSAKTVALELFHKSASFTSFDLGLVIERDVELGGDLMFAVNQHFRAGRIGPIRPYHVSDISQLDQALLKLSKGTHIGKMVISYQNPSSLLSVHQSVTHARFLQEANYILVGGMSPLGRCIIRWMVSRGAQHLSVWSRRGGNNLSPEAAALIDEMTSQGVRIQLVTCDVSNREQVLRSMQEANSERAVRGVFNYAVSYQDISFDKMTADMFCQGMAAKVFGTKNLHEATANLPLDFFTMTSSLGTVYAFPTQSTYLAANNFLDYFARYRRQSGLPATTVSLGFINDLGALTQDEVTVNLFARTKGQTVTGSQVLRALEPAFVKHLNTKDQWLGRWEDPLSAANIFTGIDPAVLANMKRAEGKGSASGTVPRWYHDPRVSLMLRAMDDAWRHGNGEDSDKATFGFDDADQSPAVQLRRHFEASIKKTRNGQDKEEVAETVTFVTDAIRTTVAGMLFIDPSVVKENHTVVDHGIDSLLAAEFRTWLNSSFGKNISMLKLMDARSSIGSIAQVIVEEAIGA.

The 429-residue stretch at 9–437 folds into the Ketosynthase family 3 (KS3) domain; the sequence is HDPIALVGIG…GTNGHCIIDH (429 aa). Residues cysteine 182, histidine 318, and histidine 360 each act as for beta-ketoacyl synthase activity in the active site. Residues 461 to 487 show a composition bias toward low complexity; that stretch reads QNGINGTNGTNGTNGTNGTNGTNGTNG. Residues 461 to 495 are disordered; it reads QNGINGTNGTNGTNGTNGTNGTNGTNGHHNPKTEA. Residues 589 to 911 enclose the Malonyl-CoA:ACP transacylase (MAT) domain; sequence FIFTGQGAQW…LKRNEDAQRL (323 aa). The tract at residues 983–1121 is N-terminal hotdog fold; the sequence is HDLLGSKVPG…GQIKIEVSTF (139 aa). The 304-residue stretch at 983–1286 folds into the PKS/mFAS DH domain; sequence HDLLGSKVPG…FTSLNNEQES (304 aa). The Proton acceptor; for dehydratase activity role is filled by histidine 1015. Residues 1133 to 1286 are C-terminal hotdog fold; that stretch reads GRLVDAQTWY…FTSLNNEQES (154 aa). Aspartate 1199 acts as the Proton donor; for dehydratase activity in catalysis. The tract at residues 1282 to 1490 is methyltransferase (CMeT) domain; it reads NEQESTSTGD…TEPAHHSTIT (209 aa). The Enoyl reductase (ER) domain maps to 1716-2028; sequence GILTSLYFKP…KGTHIGKMVI (313 aa). The Ketoreductase (KR) domain occupies 2052–2231; sequence ANYILVGGMS…ATTVSLGFIN (180 aa). Residues 2383–2461 enclose the Carrier domain; that stretch reads ETVTFVTDAI…SIAQVIVEEA (79 aa). Residue serine 2420 is modified to O-(pantetheine 4'-phosphoryl)serine.

The cofactor is pantetheine 4'-phosphate.

The protein operates within secondary metabolite biosynthesis. In terms of biological role, highly reducing polyketide synthase; part of the gene cluster that mediates the biosynthesis of the 6-methyl-2-pyrone derivative xylariolide D. XilA produces the 5-alkyl-6-methyl-2-pyrone backbone called prexylariolide D via sequential condensations of 4 malonyl-CoA units with one acetyl-CoA starter unit. During the biosynthesis, the linear polyketide chain is branched by the addition of an acetyl unit as the origin of the methyl group at the 2-pyrone ring. Prexylariolide D is then hydroxylated at the side chain by xilC to form the final product, xylariolide D. The chain is Highly reducing polyketide synthase xilA from Penicillium rubens (strain ATCC 28089 / DSM 1075 / NRRL 1951 / Wisconsin 54-1255) (Penicillium chrysogenum).